Reading from the N-terminus, the 247-residue chain is Uridylate kinase (247 aa).

ATP is bound at residue 14–17 (KLSG). The segment at 22–27 (GERGVG) is involved in allosteric activation by GTP. Glycine 56 serves as a coordination point for UMP. ATP-binding residues include glycine 57 and arginine 61. UMP-binding positions include aspartate 76 and 137–144 (IGSPYFST). Positions 165, 171, and 174 each coordinate ATP.

This sequence belongs to the UMP kinase family. In terms of assembly, homohexamer.

It localises to the cytoplasm. It carries out the reaction UMP + ATP = UDP + ADP. Its pathway is pyrimidine metabolism; CTP biosynthesis via de novo pathway; UDP from UMP (UMPK route): step 1/1. Its activity is regulated as follows. Allosterically activated by GTP. Inhibited by UTP. Catalyzes the reversible phosphorylation of UMP to UDP. The polypeptide is Uridylate kinase (Streptococcus pneumoniae (strain ATCC BAA-255 / R6)).